Here is a 286-residue protein sequence, read N- to C-terminus: Peroxisomal membrane protein pex14 (286 aa).

Positions 61–69 (TSNFVSRDW) match the SH3-binding motif. The stretch at 122–214 (KILENLDEQT…REISSLRCLQ (93 aa)) forms a coiled coil. Residues 218 to 239 (KKDDTFATTSNSSIPVLENPLD) are disordered.

Belongs to the peroxin-14 family. Interacts with PEX13 (via SH3 domain); forming the PEX13-PEX14 docking complex. Interacts with PEX5 (via WxxxF/Y motifs).

It is found in the peroxisome membrane. Functionally, component of the PEX13-PEX14 docking complex, a translocon channel that specifically mediates the import of peroxisomal cargo proteins bound to PEX5 receptor. The PEX13-PEX14 docking complex forms a large import pore which can be opened to a diameter of about 9 nm. Mechanistically, PEX5 receptor along with cargo proteins associates with the PEX14 subunit of the PEX13-PEX14 docking complex in the cytosol, leading to the insertion of the receptor into the organelle membrane with the concomitant translocation of the cargo into the peroxisome matrix. The chain is Peroxisomal membrane protein pex14 (pex14) from Schizosaccharomyces pombe (strain 972 / ATCC 24843) (Fission yeast).